The sequence spans 471 residues: uncharacterized protein (471 aa).

Helical transmembrane passes span 48–68, 85–105, 123–140, 145–165, 186–206, 223–243, 277–297, 320–340, 349–369, 379–399, 414–434, and 440–460; these read FISA…FTIV, LSGV…YPML, YTMS…YALA, SVAL…MFLY, VVNS…GGLM, SGNW…FACF, FVGC…YFLL, GNFL…FSYL, IILL…TIHY, FIIY…SVSL, VAVQ…GGAF, and VVFF…LLII.

Belongs to the major facilitator superfamily.

It localises to the golgi apparatus. The protein resides in the membrane. This is an uncharacterized protein from Schizosaccharomyces pombe (strain 972 / ATCC 24843) (Fission yeast).